A 293-amino-acid chain; its full sequence is GDT1-like protein 3 (293 aa).

Positions 1–25 (MGLISNPTRLILVATIFFLVSSISG) are cleaved as a signal peptide. 6 helical membrane passes run 89 to 109 (FSMILVTEIGDETFIIAALMA), 115 to 135 (ATVLSGALSALFVMTILSTGL), 148 to 168 (TNSAATVLYAFFGLRLLYIAW), 200 to 220 (LFSRFCTPIFLESFILTFLAE), 238 to 258 (AIGVAIGASIGHTVCTSLAVV), and 272 to 292 (VATVGGLLFLGFSVSSYFYPP).

This sequence belongs to the GDT1 family.

Its subcellular location is the membrane. In Arabidopsis thaliana (Mouse-ear cress), this protein is GDT1-like protein 3.